The chain runs to 1032 residues: MTAFSEILQRRDWENPQSVNIHCLKAHSPLASFRDMAHARDGIHAQRQSLNGQWKFKLFDAPEQVDGQFTQADFNDAEWDEIPVPSNWQLQGYDKPIYANIKYPFDVNPPFVPSDNPTGCYRTRVSLSPEDLLNTQRIIFDGVNSAFHLWCNGTWVGYSQDSRLPAEFDLTSHLVAGENTLAVMVMRWCDGSYLEDQDMWWLSGIFRDVTLLSKPQHCIEDVFITPELDACYRDGSLSIVTTIAAPETYQVQVQLFEGTQAVTEPNIARPHNRRIDERGTWNDDVVFQTLHLREPKKWTAETPNLYRLVVSLLDENGTHLESEAYPVGFRKVEISEGQLKLNGKPLLIRGVNRHEHHPELGHVMTEEDMIRDICLMKQYNFNAVRTAHYPNHPRWYELCDQYGLYVCDEANIETHGMQPMSRLSSDPQWAHAYMSRYTQMVLRDKNHPSIIIWSLGNESGHGSNHNAMYAWSKNFDPSRPVQYEGGGSNTTATDIIAPMYARVNTLVADEAVPKWPIKKWISLPNETRPLILCEYAHAMGNSLGSFDEYWAAFREFPRLQGGFIWDWVDQGLSQWDENGQHFWAYGGDFGDEINDRQFCINGLIFPDRTVHPTLQEAKYCQRMITVSLQEQTQKACTLLVTNENLFRTTDNEQLNWSLLENGQVIQTGSQVLSVEADSQTRLEIALNFTPKAQAQYYLNTDICLIEATSWAPAGHVVATEQMALRNHAGLAMPTLRTQPAPKLTENGHAIVVSSLDEKHQWRWDSQSGLLMEWNVDGKAQMLAAPQDNFFRAPLDNDIGISEVDNVDPNAWVCRWEMAGIGQWERHCVQCESETLAHAVVVTTTFAYHFGGDVQAITQWTHTLSNDGEMLLDVDVTLADALPPMPRIGLELQLPLHQADTPITWQGLGPFENYPDRLAAARFGLHTQTLAQMHTPYIFPTDSGLRCGTQWLQVNELAISGDFQFSVSQYAQQQLAEAKHTHDLLAQERIYLRLDHQHMGVGGDDSWSPSVHKEFQLTEKHYRYQLRFSPASR.

Positions 100 and 198 each coordinate substrate. Asp-198 lines the Na(+) pocket. Mg(2+) is bound by residues Glu-413, His-415, and Glu-458. Substrate-binding positions include Glu-458 and 534–537; that span reads EYAH. Glu-458 acts as the Proton donor in catalysis. Glu-534 functions as the Nucleophile in the catalytic mechanism. Asn-594 contacts Mg(2+). Na(+) is bound by residues Phe-598 and Asn-601. The substrate site is built by Asn-601 and Trp-1006.

It belongs to the glycosyl hydrolase 2 family. Homotetramer. The cofactor is Mg(2+). It depends on Na(+) as a cofactor.

The enzyme catalyses Hydrolysis of terminal non-reducing beta-D-galactose residues in beta-D-galactosides.. The sequence is that of Beta-galactosidase from Vibrio vulnificus (strain CMCP6).